A 750-amino-acid chain; its full sequence is Ribosomal RNA large subunit methyltransferase K/L (750 aa).

Positions 46-157 (TAYRLCLWSR…RGEAILSLDL (112 aa)) constitute a THUMP domain.

Belongs to the methyltransferase superfamily. RlmKL family.

Its subcellular location is the cytoplasm. It catalyses the reaction guanosine(2445) in 23S rRNA + S-adenosyl-L-methionine = N(2)-methylguanosine(2445) in 23S rRNA + S-adenosyl-L-homocysteine + H(+). The catalysed reaction is guanosine(2069) in 23S rRNA + S-adenosyl-L-methionine = N(2)-methylguanosine(2069) in 23S rRNA + S-adenosyl-L-homocysteine + H(+). Functionally, specifically methylates the guanine in position 2445 (m2G2445) and the guanine in position 2069 (m7G2069) of 23S rRNA. This Pseudomonas savastanoi pv. phaseolicola (strain 1448A / Race 6) (Pseudomonas syringae pv. phaseolicola (strain 1448A / Race 6)) protein is Ribosomal RNA large subunit methyltransferase K/L.